The primary structure comprises 388 residues: Processive diacylglycerol beta-glucosyltransferase (388 aa).

The protein belongs to the glycosyltransferase 28 family. UgtP subfamily.

The protein resides in the cell membrane. It catalyses the reaction a 1,2-diacyl-3-O-(beta-D-glucopyranosyl)-sn-glycerol + UDP-alpha-D-glucose = a 1,2-diacyl-3-O-(beta-D-Glc-(1-&gt;6)-beta-D-Glc)-sn-glycerol + UDP + H(+). The catalysed reaction is a 1,2-diacyl-3-O-(beta-D-Glc-(1-&gt;6)-beta-D-Glc)-sn-glycerol + UDP-alpha-D-glucose = a 1,2-diacyl-3-O-(beta-D-Glc-(1-&gt;6)-beta-D-Glc-(1-&gt;6)-beta-D-Glc)-sn-glycerol + UDP + H(+). It carries out the reaction a 1,2-diacyl-sn-glycerol + UDP-alpha-D-glucose = a 1,2-diacyl-3-O-(beta-D-glucopyranosyl)-sn-glycerol + UDP + H(+). It functions in the pathway glycolipid metabolism; diglucosyl-diacylglycerol biosynthesis. Its function is as follows. Processive glucosyltransferase involved in the biosynthesis of both the bilayer- and non-bilayer-forming membrane glucolipids. Is able to successively transfer up to three glucosyl residues to diacylglycerol (DAG), thereby catalyzing the formation of beta-monoglucosyl-DAG (3-O-(beta-D-glucopyranosyl)-1,2-diacyl-sn-glycerol), beta-diglucosyl-DAG (3-O-(beta-D-glucopyranosyl-beta-(1-&gt;6)-D-glucopyranosyl)-1,2-diacyl-sn-glycerol) and beta-triglucosyl-DAG (3-O-(beta-D-glucopyranosyl-beta-(1-&gt;6)-D-glucopyranosyl-beta-(1-&gt;6)-D-glucopyranosyl)-1,2-diacyl-sn-glycerol). Beta-diglucosyl-DAG is the predominant glycolipid found in Bacillales and is also used as a membrane anchor for lipoteichoic acid (LTA). The sequence is that of Processive diacylglycerol beta-glucosyltransferase from Bacillus cereus (strain ATCC 10987 / NRS 248).